The following is a 660-amino-acid chain: MSHSVSLTFPDGSVREFAPGTTGRDVAESISKSLAKKSVAIAIDGELRDLSDPVTEGRIEIVTREDKRALELIRHDAAHVMAEAVQELWPGTQVTIGPVIDNGFYYDFAKNEPFTPDDLPVIEKRMREIIARNKPFTKEVWSRDKAKEVFAVKGESYKVELVDAIPEGQDLKIYYQGDWFDLCRGPHMASTGQIGTAFKLMKVAGAYWRGDSNNPMLTRIYGTAWHTQEELDQYLHVLAEAEKRDHRRLGREMDLFHFQEEGPGVVFWHGKGWRIFQSLVAYMRRRLEGDYQEVNAPQVLDKSLWETSGHWGWYRDNMFKVTVAGDDTDDDRVFALKPMNCPGHIQIFKHGLKSYRELPVRLAEFGAVHRYEPSGALHGLMRVRGFTQDDAHIFCTDEQMAAECLKINDLILSVYEDFGFKEIVVKLSTRPEKRVGSDELWDRAEAVMTEVLKTIEAQSEGRIKTGILPGEGAFYGPKFEYTLKDAIGREWQCGTTQVDFNLPERFGAFYIDSESEKRQPVMIHRAICGSMERFLGILLENFAGHMPLWISPLQVVVATITSEADDYGREVAERLRDAGLTVETDFRNEKINYKVREHSVTKVPVIVVCGKREAEERSVNIRRLGSQAQTAMSLDEAVASLSAEATAPDLKRKAERTARA.

The region spanning 1–64 (MSHSVSLTFP…TEGRIEIVTR (64 aa)) is the TGS domain. Positions 245 to 547 (DHRRLGREMD…LLENFAGHMP (303 aa)) are catalytic. The Zn(2+) site is built by Cys341, His392, and His524.

The protein belongs to the class-II aminoacyl-tRNA synthetase family. As to quaternary structure, homodimer. It depends on Zn(2+) as a cofactor.

It is found in the cytoplasm. The enzyme catalyses tRNA(Thr) + L-threonine + ATP = L-threonyl-tRNA(Thr) + AMP + diphosphate + H(+). Catalyzes the attachment of threonine to tRNA(Thr) in a two-step reaction: L-threonine is first activated by ATP to form Thr-AMP and then transferred to the acceptor end of tRNA(Thr). Also edits incorrectly charged L-seryl-tRNA(Thr). This Sinorhizobium medicae (strain WSM419) (Ensifer medicae) protein is Threonine--tRNA ligase.